We begin with the raw amino-acid sequence, 147 residues long: Leghemoglobin 6 (147 aa).

Residues 2-147 enclose the Globin domain; the sequence is SFTDKQEALV…LATEIKKAMS (146 aa). Nitrated tyrosine occurs at positions 25 and 30. Serine 45 is a binding site for heme b. Serine 45 carries the post-translational modification Phosphoserine. Histidine 62 is a binding site for O2. Residues lysine 65, histidine 94, and lysine 97 each contribute to the heme b site. Residue tyrosine 135 is modified to Nitrated tyrosine.

Belongs to the plant globin family. As to quaternary structure, monomer. In terms of processing, nitrated in effective nodules and particularly in hypoxic conditions; this mechanism may play a protective role in the symbiosis by buffering toxic peroxynitrite NO(2)(-). Nitration level decrease during nodule senescence. Phosphorylation at Ser-45 disrupts the molecular environment of its porphyrin ring oxygen binding pocket, thus leading to a reduced oxygen consumption and to the delivery of oxygen O(2) to symbiosomes. As to expression, root nodules.

It is found in the cytoplasm. The protein localises to the cytosol. The protein resides in the nucleus. In terms of biological role, leghemoglobin that reversibly binds oxygen O(2) through a pentacoordinated heme iron. In root nodules, facilitates the diffusion of oxygen to the bacteroids while preventing the bacterial nitrogenase from being inactivated by buffering dioxygen, nitric oxide and carbon monoxide, and promoting the formation of reactive oxygen species (ROS, e.g. H(2)O(2)). This role is essential for symbiotic nitrogen fixation (SNF). This chain is Leghemoglobin 6, found in Medicago truncatula (Barrel medic).